The chain runs to 127 residues: UPF0102 protein Geob_1494 (127 aa).

Belongs to the UPF0102 family.

The polypeptide is UPF0102 protein Geob_1494 (Geotalea daltonii (strain DSM 22248 / JCM 15807 / FRC-32) (Geobacter daltonii)).